The chain runs to 208 residues: Large ribosomal subunit protein uL3 (208 aa).

Q149 carries the post-translational modification N5-methylglutamine.

It belongs to the universal ribosomal protein uL3 family. As to quaternary structure, part of the 50S ribosomal subunit. Forms a cluster with proteins L14 and L19. Post-translationally, methylated by PrmB.

Functionally, one of the primary rRNA binding proteins, it binds directly near the 3'-end of the 23S rRNA, where it nucleates assembly of the 50S subunit. This chain is Large ribosomal subunit protein uL3, found in Haemophilus influenzae (strain 86-028NP).